The primary structure comprises 815 residues: Phenylalanine--tRNA ligase beta subunit (815 aa).

In terms of domain architecture, tRNA-binding spans alanine 39–glycine 153. Positions lysine 414–alanine 498 constitute a B5 domain. Residues aspartate 476, aspartate 482, glutamate 485, and glutamate 486 each contribute to the Mg(2+) site. The FDX-ACB domain occupies proline 721–arginine 814.

Belongs to the phenylalanyl-tRNA synthetase beta subunit family. Type 1 subfamily. Tetramer of two alpha and two beta subunits. Mg(2+) is required as a cofactor.

It localises to the cytoplasm. The catalysed reaction is tRNA(Phe) + L-phenylalanine + ATP = L-phenylalanyl-tRNA(Phe) + AMP + diphosphate + H(+). This is Phenylalanine--tRNA ligase beta subunit from Prochlorococcus marinus (strain MIT 9313).